Reading from the N-terminus, the 597-residue chain is NADPH-dependent diflavin oxidoreductase 1 (597 aa).

In terms of domain architecture, Flavodoxin-like spans L6 to W150. Residues S12–A17, A59–G62, L97–N106, and D132 each bind FMN. Residues G188–K207 form a disordered region. One can recognise an FAD-binding FR-type domain in the interval S206–E447. Residues R350, R382–S385, and G416–S419 each bind FAD. Residues T460, S515–R516, K521–Q525, and D558 each bind NADP(+). An FAD-binding site is contributed by W596.

It belongs to the NADPH-dependent diflavin oxidoreductase NDOR1 family. The protein in the N-terminal section; belongs to the flavodoxin family. This sequence in the C-terminal section; belongs to the flavoprotein pyridine nucleotide cytochrome reductase family. Interacts with CIAPIN1; as part of the cytosolic iron-sulfur (Fe-S) protein assembly (CIA) machinery. Interacts with DCPS. FAD serves as cofactor. FMN is required as a cofactor. In terms of tissue distribution, low expression in brain, heart, kidney, pancreas, prostate and skeletal muscle. Highest levels in the placenta. Expressed in cancer cell lines including promyelocytic leukemia, HeLaS3, chronic myelagenous leukemia, lymphoblastic leukemia, Burkitt's lymphoma, colorectal adenocarcinoma, lung carcinoma, and melanoma G-361.

Its subcellular location is the cytoplasm. It is found in the perinuclear region. It catalyses the reaction 2 oxidized [2Fe-2S]-[protein] + NADPH = 2 reduced [2Fe-2S]-[protein] + NADP(+) + H(+). Functionally, NADPH-dependent reductase which is a central component of the cytosolic iron-sulfur (Fe-S) protein assembly (CIA) machinery. Transfers electrons from NADPH via its FAD and FMN prosthetic groups to the [2Fe-2S] cluster of CIAPIN1, another key component of the CIA machinery. In turn, this reduced cluster provides electrons for assembly of cytosolic iron-sulfur cluster proteins. It can also reduce the [2Fe-2S] cluster of CISD1 and activate this protein implicated in Fe/S cluster repair. In vitro can fully activate methionine synthase/MTR in the presence of soluble cytochrome b5/CYB5A. This is NADPH-dependent diflavin oxidoreductase 1 from Homo sapiens (Human).